The primary structure comprises 82 residues: RNA-binding protein Hfq (82 aa).

Residues 10–70 form the Sm domain; it reads DAFLNQVRKD…ISTVAPLRPI (61 aa).

The protein belongs to the Hfq family. In terms of assembly, homohexamer.

In terms of biological role, RNA chaperone that binds small regulatory RNA (sRNAs) and mRNAs to facilitate mRNA translational regulation in response to envelope stress, environmental stress and changes in metabolite concentrations. Also binds with high specificity to tRNAs. The polypeptide is RNA-binding protein Hfq (Syntrophomonas wolfei subsp. wolfei (strain DSM 2245B / Goettingen)).